The chain runs to 189 residues: UPF0398 protein lhv_1265 (189 aa).

This sequence belongs to the UPF0398 family.

The sequence is that of UPF0398 protein lhv_1265 from Lactobacillus helveticus (strain DPC 4571).